We begin with the raw amino-acid sequence, 478 residues long: Endoplasmic reticulum oxidoreductin-1 (478 aa).

Residues 1–20 (MREPLLQLIVLSLIIIVVNT) form the signal peptide. Disulfide bonds link C28-C41, C30-C39, C79-C384, C88-C93, C209-C230, and C387-C390. The disordered stretch occupies residues 117 to 143 (AAVKEEEDDDAEKCADAGNNIDPMDRT). Positions 188, 190, and 201 each coordinate FAD. 4 residues coordinate FAD: S241, H244, R283, and R295. N-linked (GlcNAc...) asparagine glycosylation is present at N377. The segment at 459-478 (ESVMNTAADGPPRKSNKIDL) is disordered.

It belongs to the EROs family. In terms of assembly, may function both as a monomer and a homodimer. It depends on FAD as a cofactor.

It is found in the endoplasmic reticulum membrane. Oxidoreductase involved in disulfide bond formation in the endoplasmic reticulum. Efficiently reoxidizes pdi-1, the enzyme catalyzing protein disulfide formation, in order to allow pdi-1 to sustain additional rounds of disulfide formation. Following pdi reoxidation, passes its electrons to molecular oxygen via FAD, leading to the production of reactive oxygen species (ROS) in the cell. The sequence is that of Endoplasmic reticulum oxidoreductin-1 (ero-1) from Caenorhabditis elegans.